Consider the following 287-residue polypeptide: uncharacterized protein (287 aa).

7 helical membrane passes run 27 to 47, 66 to 86, 97 to 117, 135 to 155, 171 to 191, 205 to 225, and 254 to 274; these read LTFS…FGVQ, LGTI…VTAF, WFWG…GVLL, IVFA…LSAL, IFIW…VLNF, LFPG…VYFV, and SALF…YFIL.

The protein localises to the cell membrane. This is an uncharacterized protein from Mycoplasma pneumoniae (strain ATCC 29342 / M129 / Subtype 1) (Mycoplasmoides pneumoniae).